The primary structure comprises 141 residues: Nucleoside triphosphatase NudI (141 aa).

The Nudix hydrolase domain occupies 1 to 141; it reads MRQRTIVCPL…RKTLRLKGLL (141 aa). Positions 38 to 59 match the Nudix box motif; that stretch reads GGVEPGERIEEALRREIREELG.

The protein belongs to the Nudix hydrolase family. NudI subfamily. In terms of assembly, monomer. Mg(2+) is required as a cofactor.

It catalyses the reaction a ribonucleoside 5'-triphosphate + H2O = a ribonucleoside 5'-phosphate + diphosphate + H(+). The enzyme catalyses a 2'-deoxyribonucleoside 5'-triphosphate + H2O = a 2'-deoxyribonucleoside 5'-phosphate + diphosphate + H(+). The catalysed reaction is dUTP + H2O = dUMP + diphosphate + H(+). It carries out the reaction dTTP + H2O = dTMP + diphosphate + H(+). It catalyses the reaction dCTP + H2O = dCMP + diphosphate + H(+). In terms of biological role, catalyzes the hydrolysis of nucleoside triphosphates, with a preference for pyrimidine deoxynucleoside triphosphates (dUTP, dTTP and dCTP). This is Nucleoside triphosphatase NudI from Escherichia coli O9:H4 (strain HS).